A 134-amino-acid chain; its full sequence is Small ribosomal subunit protein bS6 (134 aa).

A disordered region spans residues 99 to 134 (PSQLAKSADEKRARKAPRSENFDNDQDDESNDDSDE). A compositionally biased stretch (basic and acidic residues) spans 105 to 119 (SADEKRARKAPRSEN). Positions 120–134 (FDNDQDDESNDDSDE) are enriched in acidic residues.

It belongs to the bacterial ribosomal protein bS6 family.

Functionally, binds together with bS18 to 16S ribosomal RNA. This is Small ribosomal subunit protein bS6 from Psychrobacter sp. (strain PRwf-1).